The chain runs to 335 residues: Fructose-1,6-bisphosphatase class 1 (335 aa).

Mg(2+)-binding residues include Glu92, Asp114, Leu116, and Asp117. Residues 117 to 120 (DGSS), Asn209, and Lys275 each bind substrate. Residue Glu281 participates in Mg(2+) binding.

Belongs to the FBPase class 1 family. Homotetramer. Mg(2+) serves as cofactor.

Its subcellular location is the cytoplasm. It catalyses the reaction beta-D-fructose 1,6-bisphosphate + H2O = beta-D-fructose 6-phosphate + phosphate. It participates in carbohydrate biosynthesis; gluconeogenesis. The chain is Fructose-1,6-bisphosphatase class 1 from Verminephrobacter eiseniae (strain EF01-2).